A 330-amino-acid polypeptide reads, in one-letter code: tRNA N6-adenosine threonylcarbamoyltransferase (330 aa).

Residues histidine 110 and histidine 114 each coordinate Fe cation. Substrate-binding positions include 133 to 137 (MVSGG), aspartate 166, glycine 179, aspartate 183, and asparagine 271. Aspartate 299 contacts Fe cation.

It belongs to the KAE1 / TsaD family. Fe(2+) serves as cofactor.

The protein localises to the cytoplasm. The catalysed reaction is L-threonylcarbamoyladenylate + adenosine(37) in tRNA = N(6)-L-threonylcarbamoyladenosine(37) in tRNA + AMP + H(+). In terms of biological role, required for the formation of a threonylcarbamoyl group on adenosine at position 37 (t(6)A37) in tRNAs that read codons beginning with adenine. Is involved in the transfer of the threonylcarbamoyl moiety of threonylcarbamoyl-AMP (TC-AMP) to the N6 group of A37, together with TsaE and TsaB. TsaD likely plays a direct catalytic role in this reaction. The protein is tRNA N6-adenosine threonylcarbamoyltransferase of Thermosipho africanus (strain TCF52B).